A 97-amino-acid chain; its full sequence is Aspartyl/glutamyl-tRNA(Asn/Gln) amidotransferase subunit C (97 aa).

Belongs to the GatC family. Heterotrimer of A, B and C subunits.

The catalysed reaction is L-glutamyl-tRNA(Gln) + L-glutamine + ATP + H2O = L-glutaminyl-tRNA(Gln) + L-glutamate + ADP + phosphate + H(+). It carries out the reaction L-aspartyl-tRNA(Asn) + L-glutamine + ATP + H2O = L-asparaginyl-tRNA(Asn) + L-glutamate + ADP + phosphate + 2 H(+). Functionally, allows the formation of correctly charged Asn-tRNA(Asn) or Gln-tRNA(Gln) through the transamidation of misacylated Asp-tRNA(Asn) or Glu-tRNA(Gln) in organisms which lack either or both of asparaginyl-tRNA or glutaminyl-tRNA synthetases. The reaction takes place in the presence of glutamine and ATP through an activated phospho-Asp-tRNA(Asn) or phospho-Glu-tRNA(Gln). This Cyanothece sp. (strain PCC 7425 / ATCC 29141) protein is Aspartyl/glutamyl-tRNA(Asn/Gln) amidotransferase subunit C.